The sequence spans 235 residues: Small ribosomal subunit protein uS3 (235 aa).

The KH type-2 domain maps to 39–107 (IRDFIKKECH…ELHLNIVEVR (69 aa)). The interval 213-235 (AARDRKAQELQDGPAPRGAGGRR) is disordered.

This sequence belongs to the universal ribosomal protein uS3 family. As to quaternary structure, part of the 30S ribosomal subunit. Forms a tight complex with proteins S10 and S14.

Binds the lower part of the 30S subunit head. Binds mRNA in the 70S ribosome, positioning it for translation. This is Small ribosomal subunit protein uS3 from Roseobacter denitrificans (strain ATCC 33942 / OCh 114) (Erythrobacter sp. (strain OCh 114)).